Consider the following 290-residue polypeptide: MSEKLQKVLARAGHGSRREIESIIEAGRVSVDGKIAKLGDRVEVTPGLKIRIDGHLISVRESAEQICRVLAYYKPEGELCTRNDPEGRPTVFDRLPKLRGARWIAVGRLDVNTCGLLLFTTDGELANRLMHPSREVEREYAVRVFGQVDDAKLRDLSRGVQLEDGPAAFKTIKFSGGEGINQWYNVTLTEGRNREVRRLWEAVGVQVSRLIRVRYGDIPLPKGLPRGGWTELDLAQTNYLRELVELPPETSSKVAVEKDRRRMKANQIRRAVKRHSQVSGSRRSGGRNNG.

Residues 3-75 (EKLQKVLARA…ICRVLAYYKP (73 aa)) enclose the S4 RNA-binding domain. The Nucleophile role is filled by aspartate 110. Residues 251-290 (SSKVAVEKDRRRMKANQIRRAVKRHSQVSGSRRSGGRNNG) form a disordered region.

It belongs to the pseudouridine synthase RsuA family.

The catalysed reaction is uridine(2605) in 23S rRNA = pseudouridine(2605) in 23S rRNA. Functionally, responsible for synthesis of pseudouridine from uracil-2605 in 23S ribosomal RNA. The polypeptide is Ribosomal large subunit pseudouridine synthase B (rluB) (Shigella flexneri).